The chain runs to 2599 residues: Non-reducing polyketide synthase azaA (2599 aa).

Residues 95–231 are N-terminal acylcarrier protein transacylase domain (SAT); sequence PNILLSPMVV…AARSISSLQQ (137 aa). C132 functions as the Nucleophile; for transacylase activity in the catalytic mechanism. The Proton donor/acceptor; for transacylase activity role is filled by H250. Residues 372–790 form the Ketosynthase family 3 (KS3) domain; that stretch reads PNEIAVIGMS…GSNASMVVAQ (419 aa). Catalysis depends on for beta-ketoacyl synthase activity residues C539, H674, and H713. Residues 902 to 1193 are malonyl-CoA:ACP transacylase (MAT) domain; sequence FGGQISNYVG…ITSMASRALG (292 aa). Residues 1282–1413 are N-terminal hotdog fold; that stretch reads PKTLWSLIEA…GKLAFLSGQD (132 aa). One can recognise a PKS/mFAS DH domain in the interval 1282-1591; it reads PKTLWSLIEA…YHKVAKASMS (310 aa). A product template (PT) domain region spans residues 1310–1589; the sequence is LVSGHVIANT…INYHKVAKAS (280 aa). The Proton acceptor; for dehydratase activity role is filled by H1314. The segment at 1443 to 1591 is C-terminal hotdog fold; that stretch reads ADDIIQGRNI…YHKVAKASMS (149 aa). D1499 functions as the Proton donor; for dehydratase activity in the catalytic mechanism. The disordered stretch occupies residues 1601-1652; it reads EAAPSSSTRAHPTSSSSPRLPGPFVPEDKSQNETQTAGTNAVAKKKSEKSAQ. Positions 1602–1619 are enriched in low complexity; the sequence is AAPSSSTRAHPTSSSSPR. The Carrier domain occupies 1653-1727; sequence QNVLDKTRAL…GLVEYVQSAV (75 aa). S1687 carries the O-(pantetheine 4'-phosphoryl)serine modification. Residues 1749 to 1779 are disordered; sequence NLAASPSSSSSSTNLTEDSSLDPTETTTNIS. Residues 1750–1766 are compositionally biased toward low complexity; it reads LAASPSSSSSSTNLTED. Residues 1769-1779 show a composition bias toward polar residues; that stretch reads LDPTETTTNIS. The methyltransferase domain stretch occupies residues 1952 to 2140; the sequence is DSLLNKLSYR…VGYGQVDWTD (189 aa). An NADPH-binding (R) domain region spans residues 2222–2467; that stretch reads ITGATGSLGV…LCWTPVNDVA (246 aa).

Pantetheine 4'-phosphate serves as cofactor.

Its pathway is secondary metabolite biosynthesis. In terms of biological role, non-reducing polyketide synthase; part of the gene cluster that mediates the biosynthesis of azaphilones, a class of fungal metabolites characterized by a highly oxygenated pyrano-quinone bicyclic core and exhibiting a broad range of bioactivities. In the first step, the non-reducing polyketide synthase azaA forms the hexaketide precursor from successive condensations of five malonyl-CoA units, presumably with a simple acetyl-CoA starter unit. The reactive polyketide chain then undergoes a PT-mediated C2-C7 cyclization to afford the aromatic ring and is eventually released as an aldehyde through the R-domain. The putative ketoreductase azaE is proposed to catalyze the reduction of the terminal ketone resulting in the early culture product FK17-P2a. The monooxygenase azaH was demonstrated to be the only enzyme required to convert FK17-P2a to azanigerone E. AzaH first hydroxylates the benzaldehyde intermediate FK17-P2a at C4, which triggers the formation of the pyran-ring to afford azanigerone E. In parallel, the 2,4-dimethylhexanoyl chain is synthesized by the HR-PKS azaB and is proposed to be transferred to the C4-hydroxyl of azanigerone E by the acyltransferase azaD directly from the ACP domain of azaB. Alternatively, the 2,4-dimethyl-hexanoyl chain may be offloaded from the HR-PKS as a carboxylic acid and converted to an acyl-CoA by azaF. The resulting acyl-CoA molecule could then be taken up as a substrate by AzaD to form azanigerone B. To yield the carboxylic acid substituent in azanigerone A, the hydroxypropyl side chain of azanigerone B would need to undergo a C-C oxidative cleavage catalyzed by cytochrome P450 AzaI. AzaI is proposed to act on a vicinal diol that leads to a C-C bond scission either through an alkoxyradical intermediate or a peroxy complex. In the biosynthesis of azanigerone A, azanigerone B first undergoes hydroxylation at C10, possibly catalyzed by one of the two FAD-dependent monooxygenases encoded in the cluster, azaG or azaL, resulting in the vicinal diol azanigerone C. Oxidative cleavage of azanigerone C by azaI would yield the corresponding aldehyde derivative of azanigerone A. Finally, the dehydrogenase azaJ is proposed to convert the aldehyde functional group into the carboxylic acid, completing the conversion from azanigerone B to azanigerone A. Alternatively, the oxidation of aldehyde to carboxylic acid may be catalyzed by the same P450 enzyme azaI via consecutive oxidation or by endogenous alcohol dehydrogenase. The polypeptide is Non-reducing polyketide synthase azaA (Aspergillus niger (strain ATCC 1015 / CBS 113.46 / FGSC A1144 / LSHB Ac4 / NCTC 3858a / NRRL 328 / USDA 3528.7)).